The sequence spans 117 residues: Spanin, inner membrane subunit (117 aa).

Topologically, residues 1-2 (MH) are cytoplasmic. A helical; Signal-anchor for type II membrane protein transmembrane segment spans residues 3–23 (VSNFTAGLLLLVIAFGGTSII). The stretch at 24-93 (LKHKVERLET…AKKADVVAHK (70 aa)) forms a coiled coil. Residues 24-117 (LKHKVERLET…FAEDIQDLSK (94 aa)) are Periplasmic-facing.

Interacts (via C-terminus) with the spanin outer lipoprotein subunit (via C-terminus). Part of the spanin complex which spans the entire periplasmic space. The spanin complex is composed of spanin inner membrane subunit and spanin outer membrane subunit.

The protein localises to the host cell inner membrane. In terms of biological role, component of the spanin complex that disrupts the host outer membrane and participates in cell lysis during virus exit. The spanin complex conducts the final step in host lysis by disrupting the outer membrane after holin and endolysin action have permeabilized the inner membrane and degraded the host peptidoglycans. Host outer membrane disruption is possibly due to local fusion between the inner and outer membrane performed by the spanin complex. This Enterobacteria phage T4 (Bacteriophage T4) protein is Spanin, inner membrane subunit (y13K).